Reading from the N-terminus, the 80-residue chain is Conotoxin SIVB (80 aa).

Residues 1-21 form the signal peptide; sequence MGMRMMFTVFLSVVLATTVVS. The propeptide occupies 22 to 38; that stretch reads TPSDRASDGRNAAVHER. The residue at position 39 (Q39) is a Pyrrolidone carboxylic acid. A glycan (O-linked (HexNAc...) serine) is linked at S45. 4-hydroxyproline is present on residues P55, P60, P61, P69, P72, and P75. P75 carries the proline amide modification. Residues 76-80 constitute a propeptide that is removed on maturation; sequence GRRND.

Belongs to the conotoxin A superfamily. Post-translationally, contains 3 disulfide bonds. O-linked glycan consists of Hex3-HexNAc2 pentasaccharide. Expressed by the venom duct.

The protein localises to the secreted. In terms of biological role, neurotoxin with probable activity on sodium channel. Induces intense repetitive firing of the frog neuromuscular junction, leading to a tetanic contracture in muscle fiber (spastic paralysis). In vivo, shows the same effect as the whole venom when injected on fish prey. The sequence is that of Conotoxin SIVB from Conus striatus (Striated cone).